Here is a 214-residue protein sequence, read N- to C-terminus: Pyridoxine/pyridoxamine 5'-phosphate oxidase (214 aa).

Residues 8–11 and K66 contribute to the substrate site; that span reads RTNY. Residues 61–66, 76–77, R82, K83, and Q105 contribute to the FMN site; these read RIVLIK and FT. The substrate site is built by Y123, R127, and S131. Residues 140–141 and W184 each bind FMN; that span reads QS. Residue 190 to 192 coordinates substrate; sequence RLH. R194 contributes to the FMN binding site.

Belongs to the pyridoxamine 5'-phosphate oxidase family. Homodimer. FMN is required as a cofactor.

It catalyses the reaction pyridoxamine 5'-phosphate + O2 + H2O = pyridoxal 5'-phosphate + H2O2 + NH4(+). The enzyme catalyses pyridoxine 5'-phosphate + O2 = pyridoxal 5'-phosphate + H2O2. It functions in the pathway cofactor metabolism; pyridoxal 5'-phosphate salvage; pyridoxal 5'-phosphate from pyridoxamine 5'-phosphate: step 1/1. It participates in cofactor metabolism; pyridoxal 5'-phosphate salvage; pyridoxal 5'-phosphate from pyridoxine 5'-phosphate: step 1/1. Catalyzes the oxidation of either pyridoxine 5'-phosphate (PNP) or pyridoxamine 5'-phosphate (PMP) into pyridoxal 5'-phosphate (PLP). This is Pyridoxine/pyridoxamine 5'-phosphate oxidase from Burkholderia mallei (strain NCTC 10247).